We begin with the raw amino-acid sequence, 280 residues long: Lacto-N-neotetraose biosynthesis glycosyltransferase LgtE (280 aa).

Belongs to the glycosyltransferase 25 family.

It participates in glycan metabolism; lacto-N-neotetraose biosynthesis. The protein operates within bacterial outer membrane biogenesis; lipooligosaccharide biosynthesis. Functionally, adds the first galactose to the lacto-N-tetraose chain in lipooligosaccharide (LOS). The sequence is that of Lacto-N-neotetraose biosynthesis glycosyltransferase LgtE (lgtE) from Neisseria gonorrhoeae.